The following is a 313-amino-acid chain: Putative S-adenosyl-L-methionine-dependent methyltransferase MAP_4064c (313 aa).

Residues Asp129 and 158–159 (DL) contribute to the S-adenosyl-L-methionine site.

It belongs to the UPF0677 family.

Exhibits S-adenosyl-L-methionine-dependent methyltransferase activity. The protein is Putative S-adenosyl-L-methionine-dependent methyltransferase MAP_4064c of Mycolicibacterium paratuberculosis (strain ATCC BAA-968 / K-10) (Mycobacterium paratuberculosis).